We begin with the raw amino-acid sequence, 283 residues long: MQLFDELKTISKKHIKANKKAGEKVPSGLWISCPKCQQSIYHKDLGKYKTCPNCYYGFRIHARERLEWLVDTFQEFDTDLETKDPLNFPGYKEKLIKAQQDSKLNDSVLTGIAMIDDVEFALGIMDPYFIMGSMGTVTGEKITRLFERATQKNLPVILFTASGGARMQEGISSLMQMSKISQAVKEHSNAGLLYITVITDPTTGGVTASFAMQGDIILSEPRALLGFAGKRVIEQTIHQKVPDDLQDAETVLKNGFIDNIIKREDQKEKLAWLVKIHSMKGAF.

A CoA carboxyltransferase N-terminal domain is found at 29-283 (LWISCPKCQQ…VKIHSMKGAF (255 aa)). Zn(2+) is bound by residues cysteine 33, cysteine 36, cysteine 51, and cysteine 54. The C4-type zinc finger occupies 33-54 (CPKCQQSIYHKDLGKYKTCPNC).

Belongs to the AccD/PCCB family. Acetyl-CoA carboxylase is a heterohexamer composed of biotin carboxyl carrier protein (AccB), biotin carboxylase (AccC) and two subunits each of ACCase subunit alpha (AccA) and ACCase subunit beta (AccD). It depends on Zn(2+) as a cofactor.

The protein localises to the cytoplasm. The catalysed reaction is N(6)-carboxybiotinyl-L-lysyl-[protein] + acetyl-CoA = N(6)-biotinyl-L-lysyl-[protein] + malonyl-CoA. It participates in lipid metabolism; malonyl-CoA biosynthesis; malonyl-CoA from acetyl-CoA: step 1/1. Functionally, component of the acetyl coenzyme A carboxylase (ACC) complex. Biotin carboxylase (BC) catalyzes the carboxylation of biotin on its carrier protein (BCCP) and then the CO(2) group is transferred by the transcarboxylase to acetyl-CoA to form malonyl-CoA. This chain is Acetyl-coenzyme A carboxylase carboxyl transferase subunit beta, found in Ligilactobacillus salivarius (strain UCC118) (Lactobacillus salivarius).